The following is a 377-amino-acid chain: Killer cell immunoglobulin-like receptor 2DL4 (377 aa).

The first 21 residues, 1–21 (MSMSPTVIILACLGFFLDQSV), serve as a signal peptide directing secretion. Topologically, residues 22 to 242 (WAHVGGQDKP…FKTGIARHLH (221 aa)) are extracellular. 2 consecutive Ig-like C2-type domains span residues 44-104 (GGHV…HPHS) and 139-202 (GENV…FHGS). Cys51 and Cys97 are oxidised to a cystine. Residues Asn141 and Asn175 are each glycosylated (N-linked (GlcNAc...) asparagine). A disulfide bridge links Cys146 with Cys195. Residues 243-263 (AVIRYSVAIILFTILPFFLLH) form a helical membrane-spanning segment. Residues 264-377 (RWCSKKKDAA…ASSNVPAAGI (114 aa)) are Cytoplasmic-facing. The interval 338–377 (PRALSPAHEHHSQALMGSSRETTALSQTQLASSNVPAAGI) is disordered. Residues 352–377 (LMGSSRETTALSQTQLASSNVPAAGI) show a composition bias toward polar residues.

It belongs to the immunoglobulin superfamily. As to quaternary structure, interacts with peptide-bound HLA-G-B2M heterotrimeric complex. Interacts with ARRB2. Expressed in decidual NK cells and innate lymphoid cell type I (ILC1). Expressed in a subset of peripheral NK cells.

It is found in the cell membrane. Its subcellular location is the early endosome membrane. Receptor for non-classical major histocompatibility class Ib HLA-G molecules. Recognizes HLA-G in complex with B2M/beta-2 microglobulin and a nonamer self-peptide (peptide-bound HLA-G-B2M). In decidual NK cells, binds peptide-bound HLA-G-B2M complex and triggers NK cell senescence-associated secretory phenotype as a molecular switch to promote vascular remodeling and fetal growth in early pregnancy. May play a role in balancing tolerance and antiviral-immunity at maternal-fetal interface by keeping in check the effector functions of NK, CD8+ T cells and B cells. Upon interaction with peptide-bound HLA-G-B2M, initiates signaling from the endosomal compartment leading to downstream activation of PRKDC-XRCC5 and AKT1, and ultimately triggering NF-kappa-B-dependent pro-inflammatory response. This Homo sapiens (Human) protein is Killer cell immunoglobulin-like receptor 2DL4.